A 218-amino-acid polypeptide reads, in one-letter code: Probable cutinase 3 (218 aa).

Positions M1 to A17 are cleaved as a signal peptide. Cystine bridges form between C41-C120 and C67-C81. Catalysis depends on S131, which acts as the Nucleophile. C182 and C189 form a disulfide bridge. D186 is an active-site residue. H199 functions as the Proton donor/acceptor in the catalytic mechanism.

This sequence belongs to the cutinase family.

The protein resides in the secreted. It catalyses the reaction cutin + H2O = cutin monomers.. Its function is as follows. Catalyzes the hydrolysis of complex carboxylic polyesters found in the cell wall of plants. Degrades cutin, a macromolecule that forms the structure of the plant cuticle. The protein is Probable cutinase 3 of Aspergillus terreus (strain NIH 2624 / FGSC A1156).